Here is a 184-residue protein sequence, read N- to C-terminus: Large ribosomal subunit protein uL6 (184 aa).

The protein belongs to the universal ribosomal protein uL6 family. Part of the 50S ribosomal subunit.

Its function is as follows. This protein binds to the 23S rRNA, and is important in its secondary structure. It is located near the subunit interface in the base of the L7/L12 stalk, and near the tRNA binding site of the peptidyltransferase center. The polypeptide is Large ribosomal subunit protein uL6 (Fervidobacterium nodosum (strain ATCC 35602 / DSM 5306 / Rt17-B1)).